The chain runs to 313 residues: Pantoate--beta-alanine ligase (313 aa).

36–43 (MGYLHQGH) is an ATP binding site. His-43 acts as the Proton donor in catalysis. (R)-pantoate is bound at residue Gln-71. Residue Gln-71 coordinates beta-alanine. 178–181 (GKKD) is an ATP binding site. Gln-184 serves as a coordination point for (R)-pantoate. 215–218 (MSSR) is an ATP binding site.

This sequence belongs to the pantothenate synthetase family. In terms of assembly, homodimer.

The protein localises to the cytoplasm. It localises to the cytosol. It catalyses the reaction (R)-pantoate + beta-alanine + ATP = (R)-pantothenate + AMP + diphosphate + H(+). It participates in cofactor biosynthesis; (R)-pantothenate biosynthesis; (R)-pantothenate from (R)-pantoate and beta-alanine: step 1/1. Its function is as follows. Catalyzes the condensation of pantoate with beta-alanine to form pantothenate. Essential for panthotenate biosynthesis. This is Pantoate--beta-alanine ligase (PANC) from Oryza sativa subsp. japonica (Rice).